The following is a 161-amino-acid chain: Putative acetyltransferase SAV0762 (161 aa).

Belongs to the transferase hexapeptide repeat family.

The chain is Putative acetyltransferase SAV0762 from Staphylococcus aureus (strain Mu50 / ATCC 700699).